Here is a 331-residue protein sequence, read N- to C-terminus: Ornithine carbamoyltransferase (331 aa).

Residues 57–60 (STRT), Q82, R106, and 133–136 (HPTQ) contribute to the carbamoyl phosphate site. L-ornithine is bound by residues N166, D230, and 234-235 (SM). Carbamoyl phosphate contacts are provided by residues 272–273 (CL) and R317.

It belongs to the aspartate/ornithine carbamoyltransferase superfamily. OTCase family.

The protein resides in the cytoplasm. It catalyses the reaction carbamoyl phosphate + L-ornithine = L-citrulline + phosphate + H(+). It participates in amino-acid degradation; L-arginine degradation via ADI pathway; carbamoyl phosphate from L-arginine: step 2/2. Its function is as follows. Reversibly catalyzes the transfer of the carbamoyl group from carbamoyl phosphate (CP) to the N(epsilon) atom of ornithine (ORN) to produce L-citrulline. The protein is Ornithine carbamoyltransferase of Clostridium perfringens (strain SM101 / Type A).